We begin with the raw amino-acid sequence, 232 residues long: Large ribosomal subunit protein uL1 (232 aa).

Belongs to the universal ribosomal protein uL1 family. Part of the 50S ribosomal subunit.

In terms of biological role, binds directly to 23S rRNA. The L1 stalk is quite mobile in the ribosome, and is involved in E site tRNA release. Protein L1 is also a translational repressor protein, it controls the translation of the L11 operon by binding to its mRNA. This chain is Large ribosomal subunit protein uL1, found in Rhizobium rhizogenes (strain K84 / ATCC BAA-868) (Agrobacterium radiobacter).